The primary structure comprises 170 residues: Ribosome maturation factor RimM (170 aa).

Positions 97–170 (NADEYYWVDL…LVVVDWDPEF (74 aa)) constitute a PRC barrel domain.

The protein belongs to the RimM family. As to quaternary structure, binds ribosomal protein uS19.

The protein localises to the cytoplasm. An accessory protein needed during the final step in the assembly of 30S ribosomal subunit, possibly for assembly of the head region. Essential for efficient processing of 16S rRNA. May be needed both before and after RbfA during the maturation of 16S rRNA. It has affinity for free ribosomal 30S subunits but not for 70S ribosomes. The sequence is that of Ribosome maturation factor RimM from Stenotrophomonas maltophilia (strain R551-3).